A 512-amino-acid chain; its full sequence is Cobyric acid synthase (512 aa).

Residues 262 to 442 enclose the GATase cobBQ-type domain; that stretch reads WLRVAAIRLP…WHGLLETDRF (181 aa). C343 acts as the Nucleophile in catalysis. H434 is a catalytic residue.

The protein belongs to the CobB/CobQ family. CobQ subfamily.

Its pathway is cofactor biosynthesis; adenosylcobalamin biosynthesis. In terms of biological role, catalyzes amidations at positions B, D, E, and G on adenosylcobyrinic A,C-diamide. NH(2) groups are provided by glutamine, and one molecule of ATP is hydrogenolyzed for each amidation. This Rhodococcus jostii (strain RHA1) protein is Cobyric acid synthase.